The sequence spans 2013 residues: Cell adhesion molecule DSCAM (2013 aa).

Residues 1–17 (MWILALSLFQSFANVFS) form the signal peptide. The Extracellular segment spans residues 18–1594 (EEPHSSLYFV…EGLTTNEGLK (1577 aa)). Ig-like C2-type domains are found at residues 20–119 (PHSS…VHIK), 125–216 (PYTV…ARLF), 225–305 (PSIL…AKVI), 313–401 (PLKA…VQVV), 407–500 (PKII…ARIN), 504–592 (PASI…VHVT), 596–685 (PPFI…SQLI), 690–783 (PKFV…MYLT), and 787–883 (PAMI…LTVQ). 9 disulfides stabilise this stretch: Cys46/Cys102, Cys145/Cys197, Cys246/Cys293, Cys335/Cys385, Cys428/Cys484, Cys525/Cys575, Cys617/Cys669, Cys711/Cys766, and Cys809/Cys865. Residue Asn78 is glycosylated (N-linked (GlcNAc...) asparagine). Asn470 carries N-linked (GlcNAc...) asparagine glycosylation. An N-linked (GlcNAc...) asparagine glycan is attached at Asn666. 4 consecutive Fibronectin type-III domains span residues 885–982 (PPDP…ADEA), 987–1086 (PPQE…TLED), 1091–1187 (PPEN…TKED), and 1191–1285 (PPAG…AKAP). Asn1160 and Asn1250 each carry an N-linked (GlcNAc...) asparagine glycan. In terms of domain architecture, Ig-like C2-type 10 spans 1285 to 1377 (PARILTFSGT…DEIILNLQVQ (93 aa)). An intrachain disulfide couples Cys1307 to Cys1359. 2 Fibronectin type-III domains span residues 1379–1473 (PPDQ…TLGK) and 1474–1575 (EPQF…TIPP). Residues 1595 to 1615 (ILVTISCILVGVLLLFVLLLV) traverse the membrane as a helical segment. At 1616 to 2013 (VRRRRREQRL…NPYAKSYTLV (398 aa)) the chain is on the cytoplasmic side. The segment at 1616–2013 (VRRRRREQRL…NPYAKSYTLV (398 aa)) is required for netrin-mediated axon repulsion of neuronal growth cones. 2 disordered regions span residues 1718–1809 (LVDV…SASS) and 1920–2013 (RDLS…YTLV). Over residues 1799–1809 (SSMVSTESASS) the composition is skewed to low complexity. Over residues 1949–1968 (EASSSTSSTREGQQSWQQGA) the composition is skewed to polar residues.

Homodimer; mediates homophilic interactions to promote cell adhesion. Interacts with DCC; the interaction is abolished in response to NTN1. Interacts (via extracellular domain) with NTN1. Interacts (via extracellular domain) with UNC5C (via Ig-like C2-type domain). Interacts with PTK2. Interacts with FYN. Post-translationally, phosphorylated at tyrosine residues. Phosphorylation is enhanced by NTN1. As to expression, expressed in cortical and cerebellar neurons, in cells of the external and internal granular layer and of the Purkinje cell layer (at protein level). In the retina, expressed in dopaminergic and Nos1-positive amacrine cells and most retinal ganglion cells (at protein level). Expressed in the brain with highest levels in the cortex, olfactory bulb, hippocampus, thalamus, cerebellum and spinal cord. Expressed in the retinal ganglion layer (RGL).

The protein resides in the cell membrane. Its subcellular location is the cell projection. It localises to the axon. The protein localises to the synapse. It is found in the dendrite. The protein resides in the growth cone. Functionally, cell adhesion molecule that plays a role in neuronal self-avoidance. Promotes repulsion between specific neuronal processes of either the same cell or the same subtype of cells. Mediates within retinal amacrine and ganglion cell subtypes both isoneuronal self-avoidance for creating an orderly dendritic arborization and heteroneuronal self-avoidance to maintain the mosaic spacing between amacrine and ganglion cell bodies. Receptor for netrin required for axon guidance independently of and in collaboration with the receptor DCC. Might also collaborate with UNC5C in NTN1-mediated axon repulsion independently of DCC. In spinal cord development plays a role in guiding commissural axons projection and pathfinding across the ventral midline to reach the floor plate upon ligand binding. Mediates intracellular signaling by stimulating the activation of MAPK8 and MAP kinase p38. Adhesion molecule that promotes lamina-specific synaptic connections in the retina: expressed in specific subsets of interneurons and retinal ganglion cells (RGCs) and promotes synaptic connectivity via homophilic interactions. In Mus musculus (Mouse), this protein is Cell adhesion molecule DSCAM (Dscam).